A 188-amino-acid polypeptide reads, in one-letter code: Pro-adrenomedullin (188 aa).

The signal sequence occupies residues 1–21; sequence MKLVPVALLYLGSLAFLGVDT. An Arginine amide modification is found at R41. Residues 45-92 constitute a propeptide that is removed on maturation; that stretch reads ELRESSSYPTGLADVKAGPVQTLIRPQDVKGASRSPQASSPDAARIRV. The disordered stretch occupies residues 69–89; the sequence is RPQDVKGASRSPQASSPDAAR. Residues C110 and C115 are joined by a disulfide bond. Residues 129–175 are disordered; it reads DKDKDGSAPRSKISPQGYGRRRRRSLPEAGLGRTLLQPPEPKLRGAP. Tyrosine amide is present on Y146. Positions 153–188 are cleaved as a propeptide — preproAM C-terminal fragment; it reads SLPEAGLGRTLLQPPEPKLRGAPDSRVHQVLATLRI.

This sequence belongs to the adrenomedullin family.

The protein resides in the secreted. In terms of biological role, adrenomedullin/ADM and proadrenomedullin N-20 terminal peptide/PAMP are peptide hormones that act as potent hypotensive and vasodilatator agents. Numerous actions have been reported most related to the physiologic control of fluid and electrolyte homeostasis. Its function is as follows. ADM function is mediated by the CALCRL-RAMP2 and CALCRL-RAMP3 receptor complexes with ADM showing the highest potency for the CALCRL-RAMP2 complex. The protein is Pro-adrenomedullin (ADM) of Bos taurus (Bovine).